A 159-amino-acid chain; its full sequence is Growth arrest and DNA damage-inducible protein GADD45 gamma (159 aa).

Residues 43–86 (VYESAKVLNVDPDNVTFCVLAAGEEDEGDIALQIHFTLIQAFCC) are homodimerization.

This sequence belongs to the GADD45 family. Undergoes concentration-dependent homodimerization, which is required for growth inhibititory activity and enhances interaction with PCNA. Interacts with GADD45GIP1. Interacts with PCNA.

In terms of biological role, involved in the regulation of growth and apoptosis. Mediates activation of stress-responsive MTK1/MEKK4 MAPKKK. In Homo sapiens (Human), this protein is Growth arrest and DNA damage-inducible protein GADD45 gamma (GADD45G).